The sequence spans 488 residues: Ribulose bisphosphate carboxylase large chain (488 aa).

The substrate site is built by N127 and T177. The active-site Proton acceptor is the K179. Residue K181 coordinates substrate. Residues K205, D207, and E208 each coordinate Mg(2+). K205 is modified (N6-carboxylysine). H297 acts as the Proton acceptor in catalysis. Substrate-binding residues include R298, H330, and S382.

Belongs to the RuBisCO large chain family. Type I subfamily. Heterohexadecamer of 8 large chains and 8 small chains. The cofactor is Mg(2+).

Its subcellular location is the plastid. It localises to the chloroplast. It carries out the reaction 2 (2R)-3-phosphoglycerate + 2 H(+) = D-ribulose 1,5-bisphosphate + CO2 + H2O. It catalyses the reaction D-ribulose 1,5-bisphosphate + O2 = 2-phosphoglycolate + (2R)-3-phosphoglycerate + 2 H(+). RuBisCO catalyzes two reactions: the carboxylation of D-ribulose 1,5-bisphosphate, the primary event in carbon dioxide fixation, as well as the oxidative fragmentation of the pentose substrate in the photorespiration process. Both reactions occur simultaneously and in competition at the same active site. The chain is Ribulose bisphosphate carboxylase large chain from Olisthodiscus luteus (Marine phytoflagellate).